The following is a 236-amino-acid chain: 2,3,4,5-tetrahydropyridine-2,6-dicarboxylate N-acetyltransferase (236 aa).

Belongs to the transferase hexapeptide repeat family. DapH subfamily.

The catalysed reaction is (S)-2,3,4,5-tetrahydrodipicolinate + acetyl-CoA + H2O = L-2-acetamido-6-oxoheptanedioate + CoA. It functions in the pathway amino-acid biosynthesis; L-lysine biosynthesis via DAP pathway; LL-2,6-diaminopimelate from (S)-tetrahydrodipicolinate (acetylase route): step 1/3. In terms of biological role, catalyzes the transfer of an acetyl group from acetyl-CoA to tetrahydrodipicolinate. The protein is 2,3,4,5-tetrahydropyridine-2,6-dicarboxylate N-acetyltransferase of Clostridium botulinum (strain Loch Maree / Type A3).